The primary structure comprises 270 residues: Protein tonB2 (270 aa).

At 1 to 51 (MATPQPVDARTQPWRETPGGDLVALGRPVRQALHLVRHNPAQGRVLSRRET) the chain is on the cytoplasmic side. Residues 52 to 69 (ILLVLFALTLHGAVIHWL) traverse the membrane as a helical segment. At 70-270 (SQQRTPALPE…VSVPIDFKLN (201 aa)) the chain is on the periplasmic side. The interval 80-187 (VPPQVPPMTI…LTPPSANAGY (108 aa)) is disordered. Residues 94-118 (PAPPVVEPPPPEPLPPVVEEPPPPV) are compositionally biased toward pro residues. Positions 133–143 (PKPKPKPKPQP) are enriched in basic residues. Residues 144–180 (RPKPAPKAVEPAPPAPPQPAAPPAPPAPAAAPAPLTP) are compositionally biased toward pro residues. Positions 180 to 270 (PPSANAGYLH…VSVPIDFKLN (91 aa)) constitute a TonB C-terminal domain.

Belongs to the TonB family. Homodimer. Forms a complex with the accessory proteins ExbB and ExbD.

The protein resides in the cell inner membrane. Interacts with outer membrane receptor proteins that carry out high-affinity binding and energy dependent uptake into the periplasmic space of specific substrates. It could act to transduce energy from the cytoplasmic membrane to specific energy-requiring processes in the outer membrane, resulting in the release into the periplasm of ligands bound by these outer membrane proteins. This Pseudomonas aeruginosa (strain ATCC 15692 / DSM 22644 / CIP 104116 / JCM 14847 / LMG 12228 / 1C / PRS 101 / PAO1) protein is Protein tonB2 (tonB2).